The sequence spans 261 residues: Undecaprenyl-diphosphatase (261 aa).

Helical transmembrane passes span 1–21, 40–60, 79–99, 106–126, 140–160, 185–205, 210–230, and 239–259; these read MTVL…FLPI, GLTF…AYFW, GRLF…GVLF, IFRS…GLWW, VNLF…IPGV, FLMS…ELPL, LAFI…IKFL, and YLLF…VFWL.

This sequence belongs to the UppP family.

It localises to the cell membrane. It catalyses the reaction di-trans,octa-cis-undecaprenyl diphosphate + H2O = di-trans,octa-cis-undecaprenyl phosphate + phosphate + H(+). Catalyzes the dephosphorylation of undecaprenyl diphosphate (UPP). Confers resistance to bacitracin. This is Undecaprenyl-diphosphatase from Moorella thermoacetica (strain ATCC 39073 / JCM 9320).